The primary structure comprises 408 residues: MAENFMVVDGGVVAPKGFKANGHKDRKYGAALIYSETDAVAAGVFTTNKVFAHPVALSKDVLVNNNVFRAIVANSGNANCFTKGGMEDAKALVKKAADLLKIPENQVLSASTGVIGRRMPMDIITIEVERAFKNMNLENSNENASKAIMTTDAFPKTVAVEFEINGKNVRIGGIAKGAGMIAPNMLHATMLGFITTDIEISKEELTDSLQKATDESFNNAVVDGDMSTNDTVYVLANAQSGVKYTDCKADFDGALAYVSKELAKMIVSDGEGAKKLIEATVHGAETKEDAKKASMSIVRSLLLKTAVFGADPNWGRIAAAVGYSGAEMDMANFDIIISDISLENQAFLVKAGEQIADCGTPELKLAEEIMKEDKIKIIVDLKMGSFENTAFGCDLGYEYVRINSEYTT.

Residues T150, K176, T189, E271, N403, and T408 each contribute to the substrate site. Residue T189 is the Nucleophile of the active site.

Belongs to the ArgJ family. As to quaternary structure, heterotetramer of two alpha and two beta chains.

It localises to the cytoplasm. It catalyses the reaction N(2)-acetyl-L-ornithine + L-glutamate = N-acetyl-L-glutamate + L-ornithine. Its pathway is amino-acid biosynthesis; L-arginine biosynthesis; L-ornithine and N-acetyl-L-glutamate from L-glutamate and N(2)-acetyl-L-ornithine (cyclic): step 1/1. Functionally, catalyzes the transfer of the acetyl group from N(2)-acetylornithine to glutamate, forming N-acetylglutamate and L-ornithine. In Methanococcus maripaludis (strain C6 / ATCC BAA-1332), this protein is Glutamate N-acetyltransferase.